Consider the following 697-residue polypeptide: Portal protein (697 aa).

A disordered region spans residues 633-697 (MSREAAGGVP…RRAGGPYGFH (65 aa)). The span at 664–689 (ITADEERRGPERVGRFRNGGPDDPRR) shows a compositional bias: basic and acidic residues.

This sequence belongs to the herpesviridae portal protein family. As to quaternary structure, homododecamerizes. Interacts with terminase subunits TRM1 and TRM3.

Its subcellular location is the virion. It is found in the host nucleus. Forms a portal in the viral capsid through which viral DNA is translocated during DNA packaging. Assembles as a dodecamer at a single fivefold axe of the T=16 icosahedric capsid. Binds to the molecular motor that translocates the viral DNA, termed terminase. The chain is Portal protein (UL104) from Homo sapiens (Human).